The sequence spans 223 residues: Small ribosomal subunit protein uS3 (223 aa).

One can recognise a KH type-2 domain in the interval 38–106 (IREFIAKQLT…RVHINIVEIK (69 aa)).

Belongs to the universal ribosomal protein uS3 family. In terms of assembly, part of the 30S ribosomal subunit. Forms a tight complex with proteins S10 and S14.

Functionally, binds the lower part of the 30S subunit head. Binds mRNA in the 70S ribosome, positioning it for translation. This chain is Small ribosomal subunit protein uS3, found in Pediococcus pentosaceus (strain ATCC 25745 / CCUG 21536 / LMG 10740 / 183-1w).